The chain runs to 127 residues: Glycine cleavage system H protein (127 aa).

The region spanning 24–106 (TATLGISAFA…YGEGWLVKVQ (83 aa)) is the Lipoyl-binding domain. Lysine 65 carries the N6-lipoyllysine modification.

This sequence belongs to the GcvH family. As to quaternary structure, the glycine cleavage system is composed of four proteins: P, T, L and H. Requires (R)-lipoate as cofactor.

The glycine cleavage system catalyzes the degradation of glycine. The H protein shuttles the methylamine group of glycine from the P protein to the T protein. This Thermosynechococcus vestitus (strain NIES-2133 / IAM M-273 / BP-1) protein is Glycine cleavage system H protein.